A 114-amino-acid polypeptide reads, in one-letter code: Notch-regulated ankyrin repeat-containing protein (114 aa).

ANK repeat units follow at residues 50 to 79 (EGQT…DIRL) and 83 to 112 (DGWS…YSSS).

This sequence belongs to the NRARP family. Forms a ternary complex with the intracellular domain (ICD) of notch1 and rbpj/suh.

Functionally, promotes loss of intracellular domain (ICD) of Notch1 in embryos. By down-regulating ICD levels, could function as a negative feedback regulator of Notch signaling that attenuates ICD-mediated transcription. Involved in angiogenesis. May be involved in somitogenesis. The chain is Notch-regulated ankyrin repeat-containing protein (nrarp) from Xenopus laevis (African clawed frog).